The chain runs to 138 residues: Large ribosomal subunit protein uL16 (138 aa).

Residues 1–16 (MLIPRRVKHRKQHHPG) show a composition bias toward basic residues. A disordered region spans residues 1–24 (MLIPRRVKHRKQHHPGRSGAATGG).

It belongs to the universal ribosomal protein uL16 family. Part of the 50S ribosomal subunit.

Binds 23S rRNA and is also seen to make contacts with the A and possibly P site tRNAs. The polypeptide is Large ribosomal subunit protein uL16 (Arthrobacter sp. (strain FB24)).